Here is a 355-residue protein sequence, read N- to C-terminus: Phosphate acyltransferase (355 aa).

It belongs to the PlsX family. Homodimer. Probably interacts with PlsY.

It localises to the cytoplasm. It catalyses the reaction a fatty acyl-[ACP] + phosphate = an acyl phosphate + holo-[ACP]. It participates in lipid metabolism; phospholipid metabolism. Its function is as follows. Catalyzes the reversible formation of acyl-phosphate (acyl-PO(4)) from acyl-[acyl-carrier-protein] (acyl-ACP). This enzyme utilizes acyl-ACP as fatty acyl donor, but not acyl-CoA. In Azorhizobium caulinodans (strain ATCC 43989 / DSM 5975 / JCM 20966 / LMG 6465 / NBRC 14845 / NCIMB 13405 / ORS 571), this protein is Phosphate acyltransferase.